A 591-amino-acid polypeptide reads, in one-letter code: Transcription factor COE1 (591 aa).

The residue at position 1 (M1) is an N-acetylmethionine. The segment covering 1–14 (MFGIQESIQRSGSS) has biased composition (polar residues). The segment at 1–21 (MFGIQESIQRSGSSMKEEPLG) is disordered. K16 is covalently cross-linked (Glycyl lysine isopeptide (Lys-Gly) (interchain with G-Cter in SUMO1); alternate). Residue K16 forms a Glycyl lysine isopeptide (Lys-Gly) (interchain with G-Cter in SUMO2); alternate linkage. The segment at 63–66 (RKSN) is interaction with DNA. The C5-type zinc-finger motif lies at 151–170 (CRVLLTHEIMCSRCCDKKSC). Interaction with DNA regions lie at residues 197 to 204 (NCLKNAGN) and 236 to 239 (NNSK). The 84-residue stretch at 262-345 (PCIKAISPSE…KGTPGRFIYT (84 aa)) folds into the IPT/TIG domain. Positions 457–480 (GFTRNSSSVSPHGYVPSTTPQQTN) are disordered.

It belongs to the COE family. In terms of assembly, homodimer. Interacts with ZNF423 and ZNF521, leading to prevent EBF1 to bind DNA and activate target genes. Interacts with CCR4-NOT component CNOT3. (Microbial infection) Interacts with Epstein-barr virus protein EBNA2.

It is found in the nucleus. Functionally, key pioneer transcription factor of B-cell specification and commitment. Recognizes variations of the palindromic sequence 5'-ATTCCCNNGGGAATT-3'. Operates in a transcription factor network to activate B-cell-specific genes and repress genes associated with alternative cell fates. For instance, positively regulates many B-cell specific genes including BCR or CD40 while repressing genes that direct cells into alternative lineages, including GATA3 and TCF7 for the T-cell lineage. In addition to its role during lymphopoiesis, controls the thermogenic gene program in adipocytes during development and in response to environmental cold. In terms of biological role, (Microbial infection) Acts as a chromatin anchor for Epstein-Barr virus EBNA2 to mediate the assembly of EBNA2 chromatin complexes in B-cells. In addition, binds to the viral LMP1 proximal promoter and promotes its expression during latency. This chain is Transcription factor COE1 (EBF1), found in Homo sapiens (Human).